Here is a 537-residue protein sequence, read N- to C-terminus: CTP synthase (537 aa).

The tract at residues 1–268 (MNTKYIFVTG…DNLVCKKLKL (268 aa)) is amidoligase domain. S14 lines the CTP pocket. Position 14 (S14) interacts with UTP. 15-20 (SLGKGI) lines the ATP pocket. Residue Y55 coordinates L-glutamine. D72 contacts ATP. Mg(2+)-binding residues include D72 and E142. Residues 149–151 (DIE), 189–194 (KTKPTQ), and K225 each bind CTP. UTP-binding positions include 189–194 (KTKPTQ) and K225. The Glutamine amidotransferase type-1 domain maps to 293–535 (NIALVGKYVE…IKASLNSKHK (243 aa)). G355 is an L-glutamine binding site. The Nucleophile; for glutamine hydrolysis role is filled by C382. Residues 383–386 (LGMQ), E406, and R463 contribute to the L-glutamine site. Residues H508 and E510 contribute to the active site.

The protein belongs to the CTP synthase family. In terms of assembly, homotetramer.

The enzyme catalyses UTP + L-glutamine + ATP + H2O = CTP + L-glutamate + ADP + phosphate + 2 H(+). It catalyses the reaction L-glutamine + H2O = L-glutamate + NH4(+). It carries out the reaction UTP + NH4(+) + ATP = CTP + ADP + phosphate + 2 H(+). Its pathway is pyrimidine metabolism; CTP biosynthesis via de novo pathway; CTP from UDP: step 2/2. Allosterically activated by GTP, when glutamine is the substrate; GTP has no effect on the reaction when ammonia is the substrate. The allosteric effector GTP functions by stabilizing the protein conformation that binds the tetrahedral intermediate(s) formed during glutamine hydrolysis. Inhibited by the product CTP, via allosteric rather than competitive inhibition. Functionally, catalyzes the ATP-dependent amination of UTP to CTP with either L-glutamine or ammonia as the source of nitrogen. Regulates intracellular CTP levels through interactions with the four ribonucleotide triphosphates. This is CTP synthase from Clostridium kluyveri (strain ATCC 8527 / DSM 555 / NBRC 12016 / NCIMB 10680 / K1).